Consider the following 563-residue polypeptide: Arginine--tRNA ligase (563 aa).

Positions 122 to 132 (PNIAKPMSMGH) match the 'HIGH' region motif.

Belongs to the class-I aminoacyl-tRNA synthetase family. In terms of assembly, monomer.

The protein resides in the cytoplasm. The catalysed reaction is tRNA(Arg) + L-arginine + ATP = L-arginyl-tRNA(Arg) + AMP + diphosphate. The chain is Arginine--tRNA ligase from Levilactobacillus brevis (strain ATCC 367 / BCRC 12310 / CIP 105137 / JCM 1170 / LMG 11437 / NCIMB 947 / NCTC 947) (Lactobacillus brevis).